A 975-amino-acid polypeptide reads, in one-letter code: Ionotropic receptor 21a (975 aa).

Positions 1 to 21 (MFKRIVLAVINLVFLIVSTTA) are cleaved as a signal peptide. Asn67, Asn177, and Asn355 each carry an N-linked (GlcNAc...) asparagine glycan. The helical transmembrane segment at 433–453 (WPVWVAVILIYLLAIFPLAFS) threads the bilayer. An N-linked (GlcNAc...) asparagine glycan is attached at Asn464. The chain crosses the membrane as a helical span at residues 505 to 525 (IYWVFTIIITACYTGSIIAFI). N-linked (GlcNAc...) asparagine glycosylation is found at Asn561, Asn586, and Asn611. A helical membrane pass occupies residues 708-728 (MFLLMLFGYVVALGVLISEWV). Disordered regions lie at residues 757 to 839 (ATAG…HSLS) and 911 to 938 (SPHSARADESSDAGGLVRRGAGRERKEM). Composition is skewed to polar residues over residues 760-777 (GSDNGSLPVSSPTSTNRN) and 788-800 (VENSLPASGNGSA). Asn763 and Asn797 each carry an N-linked (GlcNAc...) asparagine glycan.

The protein belongs to the glutamate-gated ion channel (TC 1.A.10.1) family. In both female and male antenna, expressed specifically in 3 sensory neurons of flagellomere 13 segment (at protein level).

The protein resides in the cell projection. It is found in the cilium membrane. In terms of biological role, integral part of a neural sensory system in the antenna that provides the neural basis for the response to environmental changes in temperature (thermosensation). Specifically, required for thermosensing by the cooling cell. Plays a role in heat seeking and heat-stimulated blood feeding behavior. This is Ionotropic receptor 21a from Anopheles gambiae (African malaria mosquito).